Consider the following 328-residue polypeptide: Malate dehydrogenase (328 aa).

11-17 (GAAGQIG) is a binding site for NAD(+). Arginine 94 and arginine 100 together coordinate substrate. NAD(+) is bound by residues asparagine 107, glutamine 114, and 131–133 (VGN). Substrate contacts are provided by asparagine 133 and arginine 164. The active-site Proton acceptor is histidine 189.

This sequence belongs to the LDH/MDH superfamily. MDH type 2 family.

It carries out the reaction (S)-malate + NAD(+) = oxaloacetate + NADH + H(+). Catalyzes the reversible oxidation of malate to oxaloacetate. This is Malate dehydrogenase from Stenotrophomonas maltophilia (strain K279a).